The primary structure comprises 786 residues: Receptor-like protein 30 (786 aa).

The signal sequence occupies residues 1-30; the sequence is MIPSQSNSFSGSVITLYFFLLGSLVLRTLA. The Extracellular portion of the chain corresponds to 31–739; it reads SSRLHYCRHD…SEPEEQVINW (709 aa). 4 N-linked (GlcNAc...) asparagine glycosylation sites follow: asparagine 67, asparagine 98, asparagine 115, and asparagine 133. LRR repeat units lie at residues 110–133, 134–158, 159–181, and 183–204; these read LQQL…SLGN, LSRL…VSKL, NQLR…SFTN, and TKLS…SFIL. Residues asparagine 181, asparagine 199, and asparagine 206 are each glycosylated (N-linked (GlcNAc...) asparagine). 14 LRR repeats span residues 207-231, 233-255, 257-279, 280-304, 305-328, 329-352, 354-375, 376-399, 400-423, 425-447, 448-472, 474-496, 497-524, and 526-546; these read LTSL…MSGL, NLKY…LFTI, SLQI…NISS, SSRL…ISEI, HSLI…ISKL, VNLQ…LWGL, TVTL…ALDG, ESMQ…ICKQ, RFLK…LKNS, YWLK…VFVN, ASML…LINC, GMEL…LVSL, PSLR…GFQH, and RLID…YFSN. The N-linked (GlcNAc...) asparagine glycan is linked to asparagine 276. N-linked (GlcNAc...) asparagine glycosylation occurs at asparagine 338. N-linked (GlcNAc...) asparagine glycosylation is found at asparagine 413, asparagine 422, asparagine 434, asparagine 447, and asparagine 471. Asparagine 558 is a glycosylation site (N-linked (GlcNAc...) asparagine). 4 LRR repeats span residues 596-621, 622-645, 646-669, and 671-694; these read IPYF…VGLL, KELR…LANL, TNLE…LGSL, and FLST…QFQS. N-linked (GlcNAc...) asparagine glycosylation is found at asparagine 628 and asparagine 644. Asparagine 676 carries N-linked (GlcNAc...) asparagine glycosylation. Residues 740–760 form a helical membrane-spanning segment; the sequence is IAAAIAYGPGVFCGLVIGHIF. Topologically, residues 761 to 786 are cytoplasmic; that stretch reads FTAHKHEWFMEKFHRNKRRVVTTSAR.

Belongs to the RLP family.

It is found in the cell membrane. In terms of biological role, receptor for microbe-associated molecular patterns (MAMPs) that induces a BAK1-dependent basal immune response to necrotrophic fungi (e.g. S.sclerotiorum) in the presence of MAMPs (e.g. flg22 and SCLEROTINIA CULTURE FILTRATE ELICITOR1 (SCFE1) from the necrotrophic fungal pathogen S.sclerotiorum). Functionality seems to depend on the presence of the receptor kinase SOBIR1 as an adapter protein. Required for full non-host resistance to bacterial pathogens (e.g. P.syringae pv phaseolicola). The polypeptide is Receptor-like protein 30 (Arabidopsis thaliana (Mouse-ear cress)).